A 2210-amino-acid polypeptide reads, in one-letter code: MEESVNEIKNLIRKHFPERQELAYQRDIFLSQHHPSSLLLEGFKLLSSLVELESCEAHACQINSDQKFVDVILSDHGILCPTLPKVIPDGFKLTGKTLILLETFVRVNPDEFEKKWKSDMSKLLNLKSDLLRAGITLVPVVDGRSSYSNRFLADWVVERVRWLLIDILKKSKFMQEINIEEQEYQRLIHSLSNTKNQSLGLENIECLKKNSLGYDERLNESLFVGVRGDIRESVIREELIKLRFWFKKEIFDKQLGKFKFSQKSNLINDLVSLGSHKDSDVPSCPFCANKLMDVVYSIASHPIDEVNMKSQSDENSISIDAVERCYLQALSVCNKVKGLKVFNTRRNTLLFLDLVLLNLLCDLFKKHDDAIVRLRNAGIVVGQMLMLVNDRLLDILEAIKLIRKKLMTSPKWVQMCSRTLKNSHQDLWSQLEKLIKHPDMDSMMILAQALVSDRPVMRYTIDRESEKICRHQPFSSLVEGEQKKLFRILSSISLALVNSMKTSFSSRLLINEREYSRYFGNVRLRECYVQRFHLIKNTFGLLFYQKTGEKSRCYSIYLSINGVLEEQGSFYCDPKRFFLPIFSEDVLIEMCEEMTSWLDFSHELMTMTRPTLRLLVLAVLCSPSKRNQTFLQGLRYFLMAYANQIHHVDLMSKLRVDCMSGSEVLIQRMAVELFQTILSEGEDADLYFARRFKYLLNVSYLCHLVTKETPDRLTDQIKCFEKFIEPKVKFDCVVVNPPLNGSLTLEQEDIMIRGLDRFFSKEAKTSSDTQIPGVSKEILSFCISLFNRGRLKVTGELKSNPYRPNITSTALDLSSNKSVVIPKLDELGNILSVYDKEKLVSTCVSTMAERFKTKGRYNLDPDSMDYLILKNLTGLVSTGSRTRTNQEELSMMYESLTEDQVRAFEGIRNDVQMTLAKMANSEGSKVETTKLKSKNLSVDERESLESLWAPFGVLREIKAEVSMHEVKDFDPDVFRSDVYKELCDAVYLSPFKLTYFLEAPQDICPLGLLLKNLTTIAYQEDEFFECFKYLLIQGHYDQKLGSYEHRSRSRLGFSSEVLKLKDEVRLSTRESNSEAIADKLDKSYFTNAALRNLCFYSDDSPTEFTSISSNTGNLKFGLSYKEQVGSNRELYVGDLNTKLMTRLVEDFSEAVGSSMRYTCLNSEKEFERAICDMKMAVNNGDLSCSYDHSKWGPTMSPALFLSFLYTLELKNPRDRTKVNLEPVMNILKWHLHKVVEVPINVAEAYCVGKLKRSLGLMGCDCTSVGEEFFHQYLQSRDQVPSHIMSVLDMGQGILHNTSDLYGLITEQFLCYALDLLYDVIPVTYTSSDDQVSLIKIPCLSDEKCQDRTELLEMVCFHEFLSSKLNKFISPKSVIGTFVAEFKSRFFVMGEETPLLTKFVSAALHNVKCKTPTQLSETIDTICDQCIANGVSTHIVSKISIRVNQLIRYSGYRETPFGAIEEQDVKDWVDGSRGYRLQRKIEAIFSDDKETMFIRNCARKVFNDIKKGKIFEENLINLISRGGDEALSGFLQYAGCSEDEIRRTLDYRWVNLASFGDLRLVLRTKLMTSRRVLEKEEMPTLIKTIQSRLSRNFTKGVKKILAESINKSAFQSSVASGFIGFCKSMGSKCVRDGKGGFLYIKDIFTRIMPCLCEICEKKPKVIYCQKSLQEVNQFSKPILWDYFSLVLTNACELGEWVFSAVKSPQAPLVLCNKNFFWAVKPKAVRQIEDQLGMNHVLHSIRRNYPKLFEEHLAPFMNDLQVNRSLDSGRLKFLDVCVALDMMNENLGIISHLLKVRDNNVYIVKQSDCASAHVRQSEYTNWEVGISPQQVCRNFMVQVVLSSMINPLVMSTSCLKSFFWFNEVLDLEDDSQVDLAELTDFTLSIKNNKVSRAMFVEDIAMGYVVSSFDNIKVFLESVSVDNISLLPQEDMIDLHTVLRNVACQEAVKLKLIIQVEHTRVSTKFKLRRKMVYSYTIVSSLRVDDVSTPELELNVDAMSQCVSGSEGNHSLLDGALVIASLPLFTGHESFDLAGLFIDAGYAVTNDDNILSHVKLNFGDFYSELGNKYAYDLIGPNNPGEPLVLKEGIFYRGNERLSTYKVELSGDVIVKAIGALEDIDSVETLLCQLWPYLKTTSQTILFQQEDFVLVYDLHKEQLVRSLDKFGDWLEFSNFKVAFSRSLNDLLVSDPQGQFRLKGVTCRPLKHKVEIKDID.

Residues Arg26–Cys284 are endonuclease. Residues Glu51, Asp89, and Glu102 each contribute to the Mn(2+) site. Residue Lys115 is part of the active site. Residues Cys1171–Ile1368 form the RdRp catalytic domain. Asp1329 contacts Mg(2+).

It belongs to the Bunyavirales RNA polymerase family. Homomultimer; the oligomeric structure is essential for the polymerase activity. Interacts with nucleoprotein N. Interacts with protein Z; this interaction inhibits viral transcription and replication, Z partially blocks the product exit tunnel for the releasing nascent RNA product. Requires Mn(2+) as cofactor. The cofactor is Mg(2+).

It localises to the virion. Its subcellular location is the host cytoplasm. The enzyme catalyses RNA(n) + a ribonucleoside 5'-triphosphate = RNA(n+1) + diphosphate. Its function is as follows. RNA-dependent RNA polymerase, which is responsible for the replication and transcription of the viral RNA genome using antigenomic RNA as an intermediate. During transcription, synthesizes subgenomic RNAs and assures their capping by a cap-snatching mechanism, which involves the endonuclease activity cleaving the host capped pre-mRNAs. These short capped RNAs are then used as primers for viral transcription. The 3'-end of subgenomic mRNAs molecules are heterogeneous and not polyadenylated. The replicase function is to direct synthesis of antigenomic and genomic RNA which are encapsidated and non capped. As a consequence of the use of the same enzyme for both transcription and replication, these mechanisms need to be well coordinated. These processes may be regulated by proteins N and Z in a dose-dependent manner. Z protein inhibits the viral polymerase L und thus the viral transcription and RNA synthesis. This Junin mammarenavirus (JUNV) protein is RNA-directed RNA polymerase L.